The following is a 515-amino-acid chain: NADH-ubiquinone oxidoreductase chain 2 (515 aa).

Transmembrane regions (helical) follow at residues 63–83, 250–270, 299–319, 356–376, and 379–399; these read WPIGIAAFGLCLLFLIKNSGS, VFIYGSYGATLQQIFFFCSIA, FVLVLMWNREGIQSLLIGLFI, AITFSITMFSYAGIPPLAGFC, and FYLFFAALGCGAYFLAPVGVV.

Belongs to the complex I subunit 2 family.

The protein resides in the mitochondrion inner membrane. It catalyses the reaction a ubiquinone + NADH + 5 H(+)(in) = a ubiquinol + NAD(+) + 4 H(+)(out). Functionally, core subunit of the mitochondrial membrane respiratory chain NADH dehydrogenase (Complex I) that is believed to belong to the minimal assembly required for catalysis. Complex I functions in the transfer of electrons from NADH to the respiratory chain. The immediate electron acceptor for the enzyme is believed to be ubiquinone. The sequence is that of NADH-ubiquinone oxidoreductase chain 2 (ND2) from Beta vulgaris (Sugar beet).